Consider the following 438-residue polypeptide: Anaerobic glycerol-3-phosphate dehydrogenase subunit B (438 aa).

The protein belongs to the anaerobic G-3-P dehydrogenase subunit B family. In terms of assembly, composed of a catalytic GlpA/B dimer and of membrane bound GlpC. The cofactor is FMN.

It carries out the reaction a quinone + sn-glycerol 3-phosphate = dihydroxyacetone phosphate + a quinol. The protein operates within polyol metabolism; glycerol degradation via glycerol kinase pathway; glycerone phosphate from sn-glycerol 3-phosphate (anaerobic route): step 1/1. In terms of biological role, conversion of glycerol 3-phosphate to dihydroxyacetone. Uses fumarate or nitrate as electron acceptor. In Vibrio vulnificus (strain YJ016), this protein is Anaerobic glycerol-3-phosphate dehydrogenase subunit B.